A 361-amino-acid polypeptide reads, in one-letter code: Adenosine kinase (361 aa).

The Nuclear localization signal motif lies at Pro7–Glu15. Residue Asp34 participates in adenosine binding. Residue Ser48 participates in Mg(2+) binding. Residue Tyr76 is modified to Phosphotyrosine. Asn147 serves as a coordination point for Mg(2+). Gln305 serves as a coordination point for adenosine. Asp316 is an active-site residue. The Proton acceptor role is filled by Asp316.

It belongs to the carbohydrate kinase PfkB family. As to quaternary structure, monomer. The cofactor is Mg(2+). As to expression, widely expressed. Highly expressed in liver, testis, kidney and spleen (at protein level). In brain, expression in most forebrain structures and the cerebellum is higher than in the midbrain and brainstem (at protein level). In terms of tissue distribution, major isoform in testis and kidney. Not detected in most brain regions, except in the cerebellum, where it is expressed at a similar level to that of isoform 2 (at protein level). Major isoform in spleen and in most brain regions, except in the cerebellum, where it is expressed at a similar level to that of isoform 1 (at protein level).

Its subcellular location is the nucleus. It is found in the cytoplasm. The catalysed reaction is adenosine + ATP = AMP + ADP + H(+). Its pathway is purine metabolism; AMP biosynthesis via salvage pathway; AMP from adenosine: step 1/1. Its activity is regulated as follows. Activity is inhibited by 5-iodotubercidin and 5'-amino-5'-deoxyadenosine. Its function is as follows. Catalyzes the phosphorylation of the purine nucleoside adenosine at the 5' position in an ATP-dependent manner. Serves as a potential regulator of concentrations of extracellular adenosine and intracellular adenine nucleotides. The polypeptide is Adenosine kinase (Adk) (Mus musculus (Mouse)).